The primary structure comprises 708 residues: Ubiquitin thioesterase ZRANB1 (708 aa).

The RanBP2-type 1 zinc finger occupies glutamate 3 to serine 33. 4 residues coordinate Zn(2+): cysteine 10, cysteine 13, cysteine 24, and cysteine 27. The segment at threonine 38–arginine 73 is disordered. RanBP2-type zinc fingers lie at residues asparagine 84–threonine 113 and arginine 149–asparagine 178. 8 residues coordinate Zn(2+): cysteine 90, cysteine 93, cysteine 104, cysteine 107, cysteine 155, cysteine 158, cysteine 169, and cysteine 172. The disordered stretch occupies residues arginine 200–aspartate 223. Residues serine 206–serine 216 are compositionally biased toward polar residues. ANK repeat units follow at residues lysine 260–aspartate 290 and tyrosine 313–alanine 340. The region spanning leucine 432–methionine 592 is the OTU domain. The Nucleophile role is filled by cysteine 443. Histidine 585 functions as the Proton acceptor in the catalytic mechanism.

This sequence belongs to the peptidase C64 family. In terms of assembly, interacts with TRAF6. Interacts with APC.

The protein resides in the cytoplasm. The protein localises to the nucleus. The catalysed reaction is Thiol-dependent hydrolysis of ester, thioester, amide, peptide and isopeptide bonds formed by the C-terminal Gly of ubiquitin (a 76-residue protein attached to proteins as an intracellular targeting signal).. Ubiquitin thioesterase, which specifically hydrolyzes 'Lys-29'-linked and 'Lys-33'-linked diubiquitin. Also cleaves 'Lys-63'-linked chains, but with 40-fold less efficiency compared to 'Lys-29'-linked ones. Positive regulator of the Wnt signaling pathway that deubiquitinates APC protein, a negative regulator of Wnt-mediated transcription. Acts as a regulator of autophagy by mediating deubiquitination of PIK3C3/VPS34, thereby promoting autophagosome maturation. Plays a role in the regulation of cell morphology and cytoskeletal organization. Required in the stress fiber dynamics and cell migration. The polypeptide is Ubiquitin thioesterase ZRANB1 (Bos taurus (Bovine)).